The chain runs to 385 residues: Na(+)/H(+) antiporter NhaA (385 aa).

11 helical membrane passes run Y9–D29, I45–F65, I87–V107, G114–G134, A155–V175, T198–Q218, G220–N235, A245–V265, I282–L302, F312–M332, and Q345–M365.

Belongs to the NhaA Na(+)/H(+) (TC 2.A.33) antiporter family.

It is found in the cell membrane. It carries out the reaction Na(+)(in) + 2 H(+)(out) = Na(+)(out) + 2 H(+)(in). In terms of biological role, na(+)/H(+) antiporter that extrudes sodium in exchange for external protons. The sequence is that of Na(+)/H(+) antiporter NhaA from Tropheryma whipplei (strain Twist) (Whipple's bacillus).